A 339-amino-acid chain; its full sequence is MIKVAINGYGTIGKRVADAVSAQKDMEIIGVSKTKPSAEALIAVQRGYPIYIADMSKKDAFAKAGIPVAGSVEDMLKKADIVVDGTPGGVGESNKALYEKAGVKAIWQGGEDHEVAGFSFNAHANYKDAIGRQFVRVVSCNTTGLCRVIKAVDDAFGVVKVRAVMVRRGADPHVVKKGPIDAVVLDPPTIPSHHGPDVNTVLPHIDIVTMAMIVPTTQMHMHAITIELKKEVSRDDVLAVMRSHNRIGLVQPKTAIKSTAELKEYVMDMGRPRSDLWENGIFEASVNMVGKELFFFQAIHQEADVVIENVDAIRAMMGEVRDPETSIRMTNEAMQFTAL.

NAD(+)-binding positions include Thr11 to Ile12 and Gly110. A D-glyceraldehyde 3-phosphate-binding site is contributed by Ser139–Asn141. Residue Cys140 is the Nucleophile of the active site. Position 168 (Arg168) interacts with NAD(+). Residue His194 to Gly195 coordinates D-glyceraldehyde 3-phosphate. Gln301 lines the NAD(+) pocket.

Belongs to the glyceraldehyde-3-phosphate dehydrogenase family. Homotetramer.

The protein localises to the cytoplasm. The catalysed reaction is D-glyceraldehyde 3-phosphate + phosphate + NADP(+) = (2R)-3-phospho-glyceroyl phosphate + NADPH + H(+). It carries out the reaction D-glyceraldehyde 3-phosphate + phosphate + NAD(+) = (2R)-3-phospho-glyceroyl phosphate + NADH + H(+). It participates in carbohydrate degradation; glycolysis; pyruvate from D-glyceraldehyde 3-phosphate: step 1/5. In Methanospirillum hungatei JF-1 (strain ATCC 27890 / DSM 864 / NBRC 100397 / JF-1), this protein is Glyceraldehyde-3-phosphate dehydrogenase.